Here is a 443-residue protein sequence, read N- to C-terminus: Adenylyltransferase and sulfurtransferase UBA4 (443 aa).

Residues G83, D104, 111-115 (SNLHR), K128, and 172-173 (DT) contribute to the ATP site. Zn(2+) is bound by residues C214 and C217. C231 serves as the catalytic Glycyl thioester intermediate; for adenylyltransferase activity. Zn(2+) is bound by residues C292 and C295. The 99-residue stretch at 343–441 (QSKAPVLLDV…WSDIVNPKFP (99 aa)) folds into the Rhodanese domain. C400 functions as the Cysteine persulfide intermediate; for sulfurtransferase activity in the catalytic mechanism.

It in the N-terminal section; belongs to the HesA/MoeB/ThiF family. UBA4 subfamily. Zn(2+) serves as cofactor.

It is found in the cytoplasm. It localises to the cytosol. The protein operates within tRNA modification; 5-methoxycarbonylmethyl-2-thiouridine-tRNA biosynthesis. Its function is as follows. Plays a central role in 2-thiolation of mcm(5)S(2)U at tRNA wobble positions of cytosolic tRNA(Lys), tRNA(Glu) and tRNA(Gln). Acts by mediating the C-terminal thiocarboxylation of sulfur carrier URM1. Its N-terminus first activates URM1 as acyl-adenylate (-COAMP), then the persulfide sulfur on the catalytic cysteine is transferred to URM1 to form thiocarboxylation (-COSH) of its C-terminus. The reaction probably involves hydrogen sulfide that is generated from the persulfide intermediate and that acts as a nucleophile towards URM1. Subsequently, a transient disulfide bond is formed. Does not use thiosulfate as sulfur donor; NFS1 probably acting as a sulfur donor for thiocarboxylation reactions. Prior mcm(5) tRNA modification by the elongator complex is required for 2-thiolation. May also be involved in protein urmylation. This chain is Adenylyltransferase and sulfurtransferase UBA4, found in Scheffersomyces stipitis (strain ATCC 58785 / CBS 6054 / NBRC 10063 / NRRL Y-11545) (Yeast).